Consider the following 126-residue polypeptide: Glycine cleavage system H protein (126 aa).

The 83-residue stretch at 21–103 (TVTVGISDHA…YESGWIARIK (83 aa)) folds into the Lipoyl-binding domain. An N6-lipoyllysine modification is found at Lys62.

It belongs to the GcvH family. The glycine cleavage system is composed of four proteins: P, T, L and H. Requires (R)-lipoate as cofactor.

Its function is as follows. The glycine cleavage system catalyzes the degradation of glycine. The H protein shuttles the methylamine group of glycine from the P protein to the T protein. The protein is Glycine cleavage system H protein of Aliivibrio fischeri (strain ATCC 700601 / ES114) (Vibrio fischeri).